We begin with the raw amino-acid sequence, 511 residues long: Chromosomal replication initiator protein DnaA (511 aa).

The domain I, interacts with DnaA modulators stretch occupies residues 1 to 90 (MSVELWQQCV…RRSSAPRAAP (90 aa)). The domain II stretch occupies residues 91-174 (NAPVSAAMAA…QVEGALKHTS (84 aa)). Residues 125-161 (TAEPAQASDMAEASSRDSYDSMADSAPAPVAPGRTEQ) form a disordered region. The segment at 175–391 (YLNRTFTFET…GALKRVIAHS (217 aa)) is domain III, AAA+ region. Residues Gly219, Gly221, Lys222, and Thr223 each contribute to the ATP site. The interval 392–511 (HFMGRDITIE…YKNLLRTLTT (120 aa)) is domain IV, binds dsDNA.

Belongs to the DnaA family. In terms of assembly, oligomerizes as a right-handed, spiral filament on DNA at oriC.

Its subcellular location is the cytoplasm. Plays an essential role in the initiation and regulation of chromosomal replication. ATP-DnaA binds to the origin of replication (oriC) to initiate formation of the DNA replication initiation complex once per cell cycle. Binds the DnaA box (a 9 base pair repeat at the origin) and separates the double-stranded (ds)DNA. Forms a right-handed helical filament on oriC DNA; dsDNA binds to the exterior of the filament while single-stranded (ss)DNA is stabiized in the filament's interior. The ATP-DnaA-oriC complex binds and stabilizes one strand of the AT-rich DNA unwinding element (DUE), permitting loading of DNA polymerase. After initiation quickly degrades to an ADP-DnaA complex that is not apt for DNA replication. Binds acidic phospholipids. This is Chromosomal replication initiator protein DnaA from Pseudomonas putida (strain W619).